Reading from the N-terminus, the 302-residue chain is Polyamine aminopropyltransferase (302 aa).

Residues 4–239 (WTWHLEWQTP…GLWGFIYASD (236 aa)) form the PABS domain. Q33 serves as a coordination point for S-methyl-5'-thioadenosine. 2 residues coordinate spermidine: H64 and E88. Residues D108 and 140–141 (DG) contribute to the S-methyl-5'-thioadenosine site. Catalysis depends on D158, which acts as the Proton acceptor. P167 lines the S-methyl-5'-thioadenosine pocket.

It belongs to the spermidine/spermine synthase family. As to quaternary structure, homodimer or homotetramer.

It is found in the cytoplasm. The catalysed reaction is S-adenosyl 3-(methylsulfanyl)propylamine + putrescine = S-methyl-5'-thioadenosine + spermidine + H(+). Its pathway is amine and polyamine biosynthesis; spermidine biosynthesis; spermidine from putrescine: step 1/1. Functionally, catalyzes the irreversible transfer of a propylamine group from the amino donor S-adenosylmethioninamine (decarboxy-AdoMet) to putrescine (1,4-diaminobutane) to yield spermidine. This chain is Polyamine aminopropyltransferase, found in Sulfolobus acidocaldarius (strain ATCC 33909 / DSM 639 / JCM 8929 / NBRC 15157 / NCIMB 11770).